We begin with the raw amino-acid sequence, 313 residues long: Ribosomal RNA small subunit methyltransferase H (313 aa).

Residues 37–39 (GGH), D57, F83, D104, and Q111 contribute to the S-adenosyl-L-methionine site.

It belongs to the methyltransferase superfamily. RsmH family.

It localises to the cytoplasm. It catalyses the reaction cytidine(1402) in 16S rRNA + S-adenosyl-L-methionine = N(4)-methylcytidine(1402) in 16S rRNA + S-adenosyl-L-homocysteine + H(+). Functionally, specifically methylates the N4 position of cytidine in position 1402 (C1402) of 16S rRNA. In Mycoplasmoides gallisepticum (strain R(low / passage 15 / clone 2)) (Mycoplasma gallisepticum), this protein is Ribosomal RNA small subunit methyltransferase H.